We begin with the raw amino-acid sequence, 991 residues long: Transcription factor ROB1 (991 aa).

A DNA-binding region (zn(2)-C6 fungal-type) is located at residues 17–43 (CTVCRTIKRKCDGNTPCSNCLKRNQEC). 3 disordered regions span residues 150 to 188 (LNQQQQQQQPSPQSLSQSSASEVSTRSSPASPNSTISLA), 792 to 875 (FYAQ…EDNP), and 901 to 959 (QEEG…PQLP). Residues 152 to 168 (QQQQQQQPSPQSLSQSS) are compositionally biased toward low complexity. Polar residues predominate over residues 169 to 187 (ASEVSTRSSPASPNSTISL). The span at 795–806 (QQQQQQQQQQQQ) shows a compositional bias: low complexity. Basic and acidic residues-rich tracts occupy residues 807–817 (PKHEYHDHQQE) and 825–855 (QEEHSEKDIKIEIKDEPQPQEEHIHQDYPMK). The span at 907-931 (QQQQQQQQEQVQQEQVQQEQVQQDQ) shows a compositional bias: low complexity.

The protein resides in the nucleus. Its function is as follows. Transcription factor that mediates conventional biofilm formation and plays a key role in microcolony formation under both flow and static conditions and to epithelial surfaces. Modulates infection of mammalian hosts. This chain is Transcription factor ROB1, found in Candida albicans (strain SC5314 / ATCC MYA-2876) (Yeast).